Here is a 424-residue protein sequence, read N- to C-terminus: UPF0597 protein Shewana3_2972 (424 aa).

This sequence belongs to the UPF0597 family.

In Shewanella sp. (strain ANA-3), this protein is UPF0597 protein Shewana3_2972.